Consider the following 88-residue polypeptide: Small ribosomal subunit protein uS17 (88 aa).

It belongs to the universal ribosomal protein uS17 family. Part of the 30S ribosomal subunit.

Functionally, one of the primary rRNA binding proteins, it binds specifically to the 5'-end of 16S ribosomal RNA. The sequence is that of Small ribosomal subunit protein uS17 from Nitratidesulfovibrio vulgaris (strain ATCC 29579 / DSM 644 / CCUG 34227 / NCIMB 8303 / VKM B-1760 / Hildenborough) (Desulfovibrio vulgaris).